Consider the following 318-residue polypeptide: tRNA uridine(34) hydroxylase (318 aa).

Residues 123–217 (EDDDTVIIDA…YGKDPETKGQ (95 aa)) form the Rhodanese domain. Cys-177 functions as the Cysteine persulfide intermediate in the catalytic mechanism.

This sequence belongs to the TrhO family.

The catalysed reaction is uridine(34) in tRNA + AH2 + O2 = 5-hydroxyuridine(34) in tRNA + A + H2O. Catalyzes oxygen-dependent 5-hydroxyuridine (ho5U) modification at position 34 in tRNAs. The chain is tRNA uridine(34) hydroxylase from Staphylococcus aureus (strain Mu3 / ATCC 700698).